A 156-amino-acid chain; its full sequence is Probable succinate transporter subunit YjjB (156 aa).

A run of 4 helical transmembrane segments spans residues 7–27, 54–74, 86–106, and 128–148; these read WALLQDMVLAAVPALGFAMVF, FGMNIEWASFLAAILIGIIGI, VFTVAAVIPMFPGISAYTAMI, and FLKASFIVGALSIGLSLPGIW.

The protein belongs to the ThrE exporter (TC 2.A.79) family. In terms of assembly, the transporter is composed of YjjB and YjjP.

It localises to the cell inner membrane. Functionally, involved in succinate export with YjjP. Both proteins are required for export. The polypeptide is Probable succinate transporter subunit YjjB (Pectobacterium atrosepticum (strain SCRI 1043 / ATCC BAA-672) (Erwinia carotovora subsp. atroseptica)).